The chain runs to 185 residues: Ribosome-recycling factor (185 aa).

The protein belongs to the RRF family.

Its subcellular location is the cytoplasm. Its function is as follows. Responsible for the release of ribosomes from messenger RNA at the termination of protein biosynthesis. May increase the efficiency of translation by recycling ribosomes from one round of translation to another. The polypeptide is Ribosome-recycling factor (Shewanella baltica (strain OS185)).